Consider the following 451-residue polypeptide: Glutamyl-tRNA reductase (451 aa).

Substrate contacts are provided by residues 47–50, serine 132, 137–139, and glutamine 143; these read TCNR and EPQ. Residue cysteine 48 is the Nucleophile of the active site. NADP(+) is bound at residue 212-217; the sequence is AAGEMN.

This sequence belongs to the glutamyl-tRNA reductase family. Homodimer.

It carries out the reaction (S)-4-amino-5-oxopentanoate + tRNA(Glu) + NADP(+) = L-glutamyl-tRNA(Glu) + NADPH + H(+). Its pathway is porphyrin-containing compound metabolism; protoporphyrin-IX biosynthesis; 5-aminolevulinate from L-glutamyl-tRNA(Glu): step 1/2. In terms of biological role, catalyzes the NADPH-dependent reduction of glutamyl-tRNA(Glu) to glutamate 1-semialdehyde (GSA). In Psychrobacter sp. (strain PRwf-1), this protein is Glutamyl-tRNA reductase.